Consider the following 172-residue polypeptide: Adenine phosphoribosyltransferase (172 aa).

The protein belongs to the purine/pyrimidine phosphoribosyltransferase family. Homodimer.

It is found in the cytoplasm. It carries out the reaction AMP + diphosphate = 5-phospho-alpha-D-ribose 1-diphosphate + adenine. It participates in purine metabolism; AMP biosynthesis via salvage pathway; AMP from adenine: step 1/1. Its function is as follows. Catalyzes a salvage reaction resulting in the formation of AMP, that is energically less costly than de novo synthesis. This Clostridium novyi (strain NT) protein is Adenine phosphoribosyltransferase.